A 298-amino-acid polypeptide reads, in one-letter code: Ethanolamine ammonia-lyase small subunit (298 aa).

Residues 17-37 (MGQDVPQPVAPSKQEGAKPQC) form a disordered region. Adenosylcob(III)alamin-binding residues include Val-210, Glu-231, and Cys-261.

This sequence belongs to the EutC family. The basic unit is a heterodimer which dimerizes to form tetramers. The heterotetramers trimerize; 6 large subunits form a core ring with 6 small subunits projecting outwards. Requires adenosylcob(III)alamin as cofactor.

The protein localises to the bacterial microcompartment. It catalyses the reaction ethanolamine = acetaldehyde + NH4(+). It functions in the pathway amine and polyamine degradation; ethanolamine degradation. Its function is as follows. Catalyzes the deamination of various vicinal amino-alcohols to oxo compounds. Allows this organism to utilize ethanolamine as the sole source of nitrogen and carbon in the presence of external vitamin B12. This Salmonella paratyphi A (strain ATCC 9150 / SARB42) protein is Ethanolamine ammonia-lyase small subunit.